We begin with the raw amino-acid sequence, 95 residues long: MLCIYVCGVCLCVCFSVCMCVHVLCVYVHVCTYAHIWTTALHLRCLLPKSFSTLLFKAGFGIDTCVIPSFSMGMLVVFMASMLPTEPPPSPWVAH.

This is Putative per-hexamer repeat protein 4 (Phxr4) from Mus musculus (Mouse).